The sequence spans 150 residues: Large ribosomal subunit protein bL9 (150 aa).

It belongs to the bacterial ribosomal protein bL9 family.

In terms of biological role, binds to the 23S rRNA. The polypeptide is Large ribosomal subunit protein bL9 (Staphylococcus aureus (strain NCTC 8325 / PS 47)).